Reading from the N-terminus, the 621-residue chain is DNA mismatch repair protein MutL (621 aa).

Belongs to the DNA mismatch repair MutL/HexB family.

Its function is as follows. This protein is involved in the repair of mismatches in DNA. It is required for dam-dependent methyl-directed DNA mismatch repair. May act as a 'molecular matchmaker', a protein that promotes the formation of a stable complex between two or more DNA-binding proteins in an ATP-dependent manner without itself being part of a final effector complex. The sequence is that of DNA mismatch repair protein MutL from Petrotoga mobilis (strain DSM 10674 / SJ95).